The primary structure comprises 123 residues: Large ribosomal subunit protein bL12 (123 aa).

It belongs to the bacterial ribosomal protein bL12 family. Homodimer. Part of the ribosomal stalk of the 50S ribosomal subunit. Forms a multimeric L10(L12)X complex, where L10 forms an elongated spine to which 2 to 4 L12 dimers bind in a sequential fashion. Binds GTP-bound translation factors.

Forms part of the ribosomal stalk which helps the ribosome interact with GTP-bound translation factors. Is thus essential for accurate translation. The sequence is that of Large ribosomal subunit protein bL12 from Chlorobium phaeovibrioides (strain DSM 265 / 1930) (Prosthecochloris vibrioformis (strain DSM 265)).